Reading from the N-terminus, the 473-residue chain is Ribulose bisphosphate carboxylase large chain (473 aa).

Asn116 and Thr166 together coordinate substrate. Lys168 acts as the Proton acceptor in catalysis. Lys170 provides a ligand contact to substrate. The Mg(2+) site is built by Lys194, Asp196, and Glu197. Lys194 carries the N6-carboxylysine modification. The active-site Proton acceptor is His287. The substrate site is built by Arg288, His320, and Ser372.

Belongs to the RuBisCO large chain family. Type I subfamily. Heterohexadecamer of 8 large chains and 8 small chains. It depends on Mg(2+) as a cofactor.

It carries out the reaction 2 (2R)-3-phosphoglycerate + 2 H(+) = D-ribulose 1,5-bisphosphate + CO2 + H2O. The enzyme catalyses D-ribulose 1,5-bisphosphate + O2 = 2-phosphoglycolate + (2R)-3-phosphoglycerate + 2 H(+). RuBisCO catalyzes two reactions: the carboxylation of D-ribulose 1,5-bisphosphate, the primary event in carbon dioxide fixation, as well as the oxidative fragmentation of the pentose substrate. Both reactions occur simultaneously and in competition at the same active site. The sequence is that of Ribulose bisphosphate carboxylase large chain from Methylococcus capsulatus (strain ATCC 33009 / NCIMB 11132 / Bath).